The sequence spans 114 residues: Immunomodulatory protein FIP-Fve (114 aa).

Ser1 bears the N-acetylserine mark.

Belongs to the fungal immunomodulatory protein (FIP) family. In terms of assembly, homodimer.

Lectin with specificity for complex cell-surface carbohydrates. Possesses immunomodulatory activity, stimulates lymphocyte mitogenesis, suppresses systemic anaphylaxis reactions and edema, enhances transcription of IL-2, IFN-gamma and TNF-alpha and hemagglutinates red blood cells. This is Immunomodulatory protein FIP-Fve from Flammulina velutipes (Agaricus velutipes).